The following is a 96-amino-acid chain: Aspartyl/glutamyl-tRNA(Asn/Gln) amidotransferase subunit C (96 aa).

It belongs to the GatC family. As to quaternary structure, heterotrimer of A, B and C subunits.

The enzyme catalyses L-glutamyl-tRNA(Gln) + L-glutamine + ATP + H2O = L-glutaminyl-tRNA(Gln) + L-glutamate + ADP + phosphate + H(+). It catalyses the reaction L-aspartyl-tRNA(Asn) + L-glutamine + ATP + H2O = L-asparaginyl-tRNA(Asn) + L-glutamate + ADP + phosphate + 2 H(+). Allows the formation of correctly charged Asn-tRNA(Asn) or Gln-tRNA(Gln) through the transamidation of misacylated Asp-tRNA(Asn) or Glu-tRNA(Gln) in organisms which lack either or both of asparaginyl-tRNA or glutaminyl-tRNA synthetases. The reaction takes place in the presence of glutamine and ATP through an activated phospho-Asp-tRNA(Asn) or phospho-Glu-tRNA(Gln). The sequence is that of Aspartyl/glutamyl-tRNA(Asn/Gln) amidotransferase subunit C from Fusobacterium nucleatum subsp. nucleatum (strain ATCC 25586 / DSM 15643 / BCRC 10681 / CIP 101130 / JCM 8532 / KCTC 2640 / LMG 13131 / VPI 4355).